Consider the following 139-residue polypeptide: Acidic phospholipase A2 Ts-A4 (139 aa).

The N-terminal stretch at 1-16 (MRTLWILAVLLVGVEG) is a signal peptide. Disulfide bonds link Cys42-Cys132, Cys44-Cys60, Cys59-Cys111, Cys65-Cys139, Cys66-Cys104, Cys73-Cys97, and Cys91-Cys102. Ca(2+)-binding residues include Tyr43, Gly45, and Gly47. The active site involves His63. Ca(2+) is bound at residue Asp64. Asp105 is a catalytic residue.

Ca(2+) is required as a cofactor. In terms of tissue distribution, expressed by the venom gland.

The protein localises to the secreted. It carries out the reaction a 1,2-diacyl-sn-glycero-3-phosphocholine + H2O = a 1-acyl-sn-glycero-3-phosphocholine + a fatty acid + H(+). PLA2 catalyzes the calcium-dependent hydrolysis of the 2-acyl groups in 3-sn-phosphoglycerides. This chain is Acidic phospholipase A2 Ts-A4, found in Trimeresurus stejnegeri (Chinese green tree viper).